A 473-amino-acid chain; its full sequence is Photosystem II CP43 reaction center protein (473 aa).

A propeptide spanning residues 1–14 (MKTLYSLRRSYPVE) is cleaved from the precursor. Threonine 15 carries the post-translational modification N-acetylthreonine. Threonine 15 carries the post-translational modification Phosphothreonine. Transmembrane regions (helical) follow at residues 69-93 (LFEV…PHLA), 134-155 (LIGP…KDKN), 178-200 (KALY…RKIT), 255-275 (KPFA…LSYS), and 291-312 (WFNN…ASQA). Glutamate 367 provides a ligand contact to [CaMn4O5] cluster. A helical membrane pass occupies residues 447–471 (RARAAAAGFEKGIDRDTEPVLFMNP).

It belongs to the PsbB/PsbC family. PsbC subfamily. PSII is composed of 1 copy each of membrane proteins PsbA, PsbB, PsbC, PsbD, PsbE, PsbF, PsbH, PsbI, PsbJ, PsbK, PsbL, PsbM, PsbT, PsbX, PsbY, PsbZ, Psb30/Ycf12, at least 3 peripheral proteins of the oxygen-evolving complex and a large number of cofactors. It forms dimeric complexes. Binds multiple chlorophylls and provides some of the ligands for the Ca-4Mn-5O cluster of the oxygen-evolving complex. It may also provide a ligand for a Cl- that is required for oxygen evolution. PSII binds additional chlorophylls, carotenoids and specific lipids. serves as cofactor.

It is found in the plastid. It localises to the chloroplast thylakoid membrane. One of the components of the core complex of photosystem II (PSII). It binds chlorophyll and helps catalyze the primary light-induced photochemical processes of PSII. PSII is a light-driven water:plastoquinone oxidoreductase, using light energy to abstract electrons from H(2)O, generating O(2) and a proton gradient subsequently used for ATP formation. The polypeptide is Photosystem II CP43 reaction center protein (Zygnema circumcarinatum (Green alga)).